A 189-amino-acid chain; its full sequence is MPVAKDNQFWDALMENKVAKKLIKKHKCKAKCENIDDLANRYEVSKQEVEKVFKIFQLMDDDGSGTISSSEVAKMLNELGIDVSPKVVQAVMRSSDVSGDGQIDFEEFLAAVTSKIKLSTVKADVQLMLSKIDNNPEKVISAEELVVAWSETVSTNITVKEACALIQQADTQGRGKATIHEFITMCQTV.

Residues 31-54 are a coiled coil; it reads KCENIDDLANRYEVSKQEVEKVFK. 4 EF-hand domains span residues 47–82, 83–118, 120–155, and 157–189; these read QEVE…LGID, VSPK…KIKL, TVKA…TVST, and ITVK…CQTV. D60, D62, S64, T66, E71, D96, S98, D100, Q102, E107, D133, N135, E137, and E144 together coordinate Ca(2+).

This is an uncharacterized protein from Caenorhabditis elegans.